The primary structure comprises 168 residues: Transmembrane protein 229b (168 aa).

Topologically, residues 1-14 (MAPPEPLTALSRWY) are cytoplasmic. The helical transmembrane segment at 15–35 (LYAIHGYFCEVMFTAAWDFVV) threads the bilayer. Over 36–40 (NYNWK) the chain is Extracellular. The chain crosses the membrane as a helical span at residues 41 to 61 (FPGVTSVWALFIYGTSILIVE). Over 62 to 72 (KMYLYLKDKCN) the chain is Cytoplasmic. Residues 73–93 (ILIRCLIYTLWTYIWEFSTGL) form a helical membrane-spanning segment. At 94–109 (ILRQFNACPWDYSQFD) the chain is on the extracellular side. Residues 110–130 (FDFMGLITLEYAIPWFCASFI) form a helical membrane-spanning segment. At 131–168 (MEQLVIRNTLRLRFDEHAEPGSPVMSTVSMANGHVKCN) the chain is on the cytoplasmic side.

Belongs to the TMEM229 family.

It is found in the membrane. This is Transmembrane protein 229b (tmem229b) from Xenopus tropicalis (Western clawed frog).